The following is a 92-amino-acid chain: Small ribosomal subunit protein bS20 (92 aa).

The disordered stretch occupies residues 1-20 (MANIASAKKRARQAENNRAH).

It belongs to the bacterial ribosomal protein bS20 family.

Its function is as follows. Binds directly to 16S ribosomal RNA. The sequence is that of Small ribosomal subunit protein bS20 from Methylococcus capsulatus (strain ATCC 33009 / NCIMB 11132 / Bath).